Reading from the N-terminus, the 501-residue chain is Glutathione gamma-glutamylcysteinyltransferase 1 (501 aa).

The 221-residue stretch at 1 to 221 (MAMAGLYRRL…GFMLISRPHR (221 aa)) folds into the Peptidase C83 domain. Active-site residues include Cys-56, His-162, and Asp-180.

This sequence belongs to the phytochelatin synthase family. As to expression, expressed in roots, nodules and leaves.

The enzyme catalyses [Glu(-Cys)](n)-Gly + glutathione + H(+) = [Glu(-Cys)](n+1)-Gly + glycine. Requires cadmium for activity. Also activated in vitro by Zn(2+), Cu(2+), Fe(2+) or Fe(3+) ions, but not by Co(2+) or Ni(2+) ions. Functionally, involved in the synthesis of phytochelatins (PC) and homophytochelatins (hPC), the heavy-metal-binding peptides of plants. This Lotus japonicus (Lotus corniculatus var. japonicus) protein is Glutathione gamma-glutamylcysteinyltransferase 1 (PCS1).